The sequence spans 267 residues: MTIETQEEPPEIKVYLPRVGITNLKSVAKIEWKGRIYTFIPTFEVAIDLPEEKKGIHMSRLVESITETMSEAVEEEVKKVHTSLEDLALCIIRRIEKKHSHKRAEVWIKSTLILERQTPASGKTSYEPYDVEVGVIKNSDGSIKKVLKVKVIGNTACPHAMANNQGKTHIQRAIAELEIETHFNEDIALEDMIEVVESSFSSPTYTLLKTPDENAVVRRMYENPKFVEDVAREIVYKARNRFKGKIHVKVISHESIHKHDVIAEVWA.

Belongs to the GTP cyclohydrolase IV family. As to quaternary structure, homodimer. Fe(2+) serves as cofactor.

The enzyme catalyses GTP + H2O = 7,8-dihydroneopterin 2',3'-cyclic phosphate + formate + diphosphate + H(+). It functions in the pathway cofactor biosynthesis; 5,6,7,8-tetrahydromethanopterin biosynthesis. Functionally, converts GTP to 7,8-dihydro-D-neopterin 2',3'-cyclic phosphate, the first intermediate in the biosynthesis of coenzyme methanopterin. In Pyrococcus furiosus (strain ATCC 43587 / DSM 3638 / JCM 8422 / Vc1), this protein is GTP cyclohydrolase MptA.